We begin with the raw amino-acid sequence, 434 residues long: RNA polymerase II holoenzyme cyclin-like subunit (434 aa).

A Cyclin N-terminal domain is found at 23–155; the sequence is EARRRVLLLE…LIEEMDSYLL (133 aa). A compositionally biased stretch (low complexity) spans 248–278; sequence GSSTNPININNNNNTNTSNNNGTTSTTTTTT. 3 disordered regions span residues 248-292, 301-320, and 330-362; these read GSST…DNTE, LTKS…DIDN, and QIQN…GQIS. The segment covering 330-359 has biased composition (low complexity); the sequence is QIQNQTQHQHQESTHNNTSSTNTGRNGING.

The protein belongs to the cyclin family. Cyclin C subfamily. Component of the SRB8-11 complex, a regulatory module of the Mediator complex.

It localises to the nucleus. Its function is as follows. Component of the SRB8-11 complex. The SRB8-11 complex is a regulatory module of the Mediator complex which is itself involved in regulation of basal and activated RNA polymerase II-dependent transcription. The SRB8-11 complex may be involved in the transcriptional repression of a subset of genes regulated by Mediator. It may inhibit the association of the Mediator complex with RNA polymerase II to form the holoenzyme complex. The SRB8-11 complex phosphorylates the C-terminal domain (CTD) of the largest subunit of RNA polymerase II. This chain is RNA polymerase II holoenzyme cyclin-like subunit (SSN8), found in Candida albicans (strain SC5314 / ATCC MYA-2876) (Yeast).